The primary structure comprises 328 residues: DNA-directed RNA polymerase subunit alpha (328 aa).

The tract at residues 1–231 is alpha N-terminal domain (alpha-NTD); it reads MIYQMQMPTK…DHITFFANFS (231 aa). An alpha C-terminal domain (alpha-CTD) region spans residues 247-328; that stretch reads DEFESMRKLL…MDITRYQLKG (82 aa).

It belongs to the RNA polymerase alpha chain family. In terms of assembly, homodimer. The RNAP catalytic core consists of 2 alpha, 1 beta, 1 beta' and 1 omega subunit. When a sigma factor is associated with the core the holoenzyme is formed, which can initiate transcription.

It catalyses the reaction RNA(n) + a ribonucleoside 5'-triphosphate = RNA(n+1) + diphosphate. Its function is as follows. DNA-dependent RNA polymerase catalyzes the transcription of DNA into RNA using the four ribonucleoside triphosphates as substrates. This Chlorobaculum tepidum (strain ATCC 49652 / DSM 12025 / NBRC 103806 / TLS) (Chlorobium tepidum) protein is DNA-directed RNA polymerase subunit alpha.